Reading from the N-terminus, the 326-residue chain is Siroheme decarboxylase NirDL subunit (326 aa).

The protein belongs to the Ahb/Nir family. As to quaternary structure, forms a complex composed of NirDL, NirG and NirH. All proteins are required for the total conversion of siroheme to didecarboxysiroheme.

The catalysed reaction is siroheme + 2 H(+) = 12,18-didecarboxysiroheme + 2 CO2. The protein operates within porphyrin-containing compound metabolism. In terms of biological role, involved in heme d1 biosynthesis. Catalyzes the decarboxylation of siroheme into didecarboxysiroheme. Siroheme is probably decarboxylated to monodecarboxysiroheme, which is in turn decarboxylated to didecarboxysiroheme. The protein is Siroheme decarboxylase NirDL subunit of Paracoccus pantotrophus (Thiosphaera pantotropha).